The sequence spans 130 residues: Large ribosomal subunit protein bL12 (130 aa).

It belongs to the bacterial ribosomal protein bL12 family. Homodimer. Part of the ribosomal stalk of the 50S ribosomal subunit. Forms a multimeric L10(L12)X complex, where L10 forms an elongated spine to which 2 to 4 L12 dimers bind in a sequential fashion. Binds GTP-bound translation factors.

Its function is as follows. Forms part of the ribosomal stalk which helps the ribosome interact with GTP-bound translation factors. Is thus essential for accurate translation. The chain is Large ribosomal subunit protein bL12 from Herpetosiphon aurantiacus (strain ATCC 23779 / DSM 785 / 114-95).